The primary structure comprises 293 residues: GTPase Era (293 aa).

An Era-type G domain is found at 5-174 (RTISVCIIGR…ITGKAQIAPW (170 aa)). The G1 stretch occupies residues 13 to 20 (GRPNSGKS). 13–20 (GRPNSGKS) lines the GTP pocket. The G2 stretch occupies residues 39 to 43 (QTTRS). The segment at 60–63 (DTPG) is G3. GTP is bound by residues 60-64 (DTPGI) and 122-125 (NKID). A G4 region spans residues 122–125 (NKID). The segment at 150-152 (ISA) is G5. Positions 202–279 (LQQELPYKLT…HLFLFVKVHE (78 aa)) constitute a KH type-2 domain.

Belongs to the TRAFAC class TrmE-Era-EngA-EngB-Septin-like GTPase superfamily. Era GTPase family. As to quaternary structure, monomer.

Its subcellular location is the cytoplasm. The protein resides in the cell inner membrane. In terms of biological role, an essential GTPase that binds both GDP and GTP, with rapid nucleotide exchange. Plays a role in 16S rRNA processing and 30S ribosomal subunit biogenesis and possibly also in cell cycle regulation and energy metabolism. This Rickettsia akari (strain Hartford) protein is GTPase Era.